A 246-amino-acid polypeptide reads, in one-letter code: UDP-2,3-diacylglucosamine hydrolase (246 aa).

Mn(2+)-binding residues include aspartate 8, histidine 10, aspartate 41, asparagine 79, and histidine 114. 79–80 (NR) contributes to the substrate binding site. Substrate is bound by residues aspartate 122, serine 160, lysine 164, lysine 167, and histidine 195. Mn(2+) contacts are provided by histidine 195 and histidine 197.

It belongs to the LpxH family. Requires Mn(2+) as cofactor.

Its subcellular location is the cell inner membrane. It carries out the reaction UDP-2-N,3-O-bis[(3R)-3-hydroxytetradecanoyl]-alpha-D-glucosamine + H2O = 2-N,3-O-bis[(3R)-3-hydroxytetradecanoyl]-alpha-D-glucosaminyl 1-phosphate + UMP + 2 H(+). It functions in the pathway glycolipid biosynthesis; lipid IV(A) biosynthesis; lipid IV(A) from (3R)-3-hydroxytetradecanoyl-[acyl-carrier-protein] and UDP-N-acetyl-alpha-D-glucosamine: step 4/6. Its function is as follows. Hydrolyzes the pyrophosphate bond of UDP-2,3-diacylglucosamine to yield 2,3-diacylglucosamine 1-phosphate (lipid X) and UMP by catalyzing the attack of water at the alpha-P atom. Involved in the biosynthesis of lipid A, a phosphorylated glycolipid that anchors the lipopolysaccharide to the outer membrane of the cell. The sequence is that of UDP-2,3-diacylglucosamine hydrolase from Tolumonas auensis (strain DSM 9187 / NBRC 110442 / TA 4).